The primary structure comprises 368 residues: tRNA-specific 2-thiouridylase MnmA (368 aa).

ATP contacts are provided by residues 11–18 (GMSGGVDS) and M37. Residues 97 to 99 (NPD) are interaction with target base in tRNA. The active-site Nucleophile is C102. Residues C102 and C199 are joined by a disulfide bond. G127 serves as a coordination point for ATP. The segment at 149–151 (KDQ) is interaction with tRNA. Catalysis depends on C199, which acts as the Cysteine persulfide intermediate. The interval 311–312 (RY) is interaction with tRNA.

The protein belongs to the MnmA/TRMU family. Interacts with TusE.

Its subcellular location is the cytoplasm. It carries out the reaction S-sulfanyl-L-cysteinyl-[protein] + uridine(34) in tRNA + AH2 + ATP = 2-thiouridine(34) in tRNA + L-cysteinyl-[protein] + A + AMP + diphosphate + H(+). Functionally, catalyzes the 2-thiolation of uridine at the wobble position (U34) of tRNA(Lys), tRNA(Glu) and tRNA(Gln), leading to the formation of s(2)U34, the first step of tRNA-mnm(5)s(2)U34 synthesis. Sulfur is provided by IscS, via a sulfur-relay system. Binds ATP and its substrate tRNAs. The protein is tRNA-specific 2-thiouridylase MnmA of Klebsiella pneumoniae subsp. pneumoniae (strain ATCC 700721 / MGH 78578).